The sequence spans 272 residues: GPN-loop GTPase 3 (272 aa).

Residue 13–18 (GAGKST) participates in GTP binding. Residues 70-72 (GPN) carry the Gly-Pro-Asn (GPN)-loop; involved in dimer interface motif. 173–176 (SKLD) is a GTP binding site.

It belongs to the GPN-loop GTPase family. As to quaternary structure, heterodimers with NPA3/GPN1 or GPN2. Binds to RNA polymerase II (RNAPII).

Small GTPase required for proper nuclear localization of RNA polymerase II and III (RNAPII and RNAPIII). May act at an RNAP assembly step prior to nuclear import. Promotes sister chromatid separation during anaphase. This is GPN-loop GTPase 3 from Saccharomyces cerevisiae (strain ATCC 204508 / S288c) (Baker's yeast).